We begin with the raw amino-acid sequence, 415 residues long: Gamma-glutamyl phosphate reductase (415 aa).

The protein belongs to the gamma-glutamyl phosphate reductase family.

Its subcellular location is the cytoplasm. The catalysed reaction is L-glutamate 5-semialdehyde + phosphate + NADP(+) = L-glutamyl 5-phosphate + NADPH + H(+). It functions in the pathway amino-acid biosynthesis; L-proline biosynthesis; L-glutamate 5-semialdehyde from L-glutamate: step 2/2. Functionally, catalyzes the NADPH-dependent reduction of L-glutamate 5-phosphate into L-glutamate 5-semialdehyde and phosphate. The product spontaneously undergoes cyclization to form 1-pyrroline-5-carboxylate. This is Gamma-glutamyl phosphate reductase from Clostridium perfringens (strain ATCC 13124 / DSM 756 / JCM 1290 / NCIMB 6125 / NCTC 8237 / Type A).